Here is a 427-residue protein sequence, read N- to C-terminus: UDP-N-acetylglucosamine 1-carboxyvinyltransferase 1 (427 aa).

23–24 (KN) contributes to the phosphoenolpyruvate binding site. Residue Arg-96 participates in UDP-N-acetyl-alpha-D-glucosamine binding. Cys-120 functions as the Proton donor in the catalytic mechanism. At Cys-120 the chain carries 2-(S-cysteinyl)pyruvic acid O-phosphothioketal. Residues 125–129 (RPIDL), Asp-309, and Val-331 contribute to the UDP-N-acetyl-alpha-D-glucosamine site.

The protein belongs to the EPSP synthase family. MurA subfamily.

It localises to the cytoplasm. The catalysed reaction is phosphoenolpyruvate + UDP-N-acetyl-alpha-D-glucosamine = UDP-N-acetyl-3-O-(1-carboxyvinyl)-alpha-D-glucosamine + phosphate. The protein operates within cell wall biogenesis; peptidoglycan biosynthesis. Functionally, cell wall formation. Adds enolpyruvyl to UDP-N-acetylglucosamine. This Streptococcus pneumoniae (strain ATCC BAA-255 / R6) protein is UDP-N-acetylglucosamine 1-carboxyvinyltransferase 1.